A 297-amino-acid chain; its full sequence is Aspartate carbamoyltransferase catalytic subunit (297 aa).

Carbamoyl phosphate is bound by residues R51 and T52. L-aspartate is bound at residue K79. Carbamoyl phosphate is bound by residues R101, H130, and Q133. L-aspartate-binding residues include R163 and R215. Carbamoyl phosphate is bound by residues G256 and P257.

Belongs to the aspartate/ornithine carbamoyltransferase superfamily. ATCase family. As to quaternary structure, heterododecamer (2C3:3R2) of six catalytic PyrB chains organized as two trimers (C3), and six regulatory PyrI chains organized as three dimers (R2).

The catalysed reaction is carbamoyl phosphate + L-aspartate = N-carbamoyl-L-aspartate + phosphate + H(+). It functions in the pathway pyrimidine metabolism; UMP biosynthesis via de novo pathway; (S)-dihydroorotate from bicarbonate: step 2/3. Its function is as follows. Catalyzes the condensation of carbamoyl phosphate and aspartate to form carbamoyl aspartate and inorganic phosphate, the committed step in the de novo pyrimidine nucleotide biosynthesis pathway. This Ehrlichia ruminantium (strain Gardel) protein is Aspartate carbamoyltransferase catalytic subunit.